Reading from the N-terminus, the 574-residue chain is NEDD4-binding protein 2-like 2 (574 aa).

Disordered regions lie at residues 82 to 110, 127 to 161, 182 to 204, and 542 to 574; these read HKEM…LAPA, YKPP…QKFN, ENEN…QTLS, and TQKS…TDDY. Basic and acidic residues-rich tracts occupy residues 129–141 and 149–161; these read PPEK…RKNE and DSKR…QKFN. Residues 162-196 are a coiled coil; that stretch reads SKKLEIDTELSQFYKEIEELENENEASQGSCKEPE. Residues 563–574 are compositionally biased toward polar residues; that stretch reads GSHSQVSITDDY.

This Rattus norvegicus (Rat) protein is NEDD4-binding protein 2-like 2 (N4bp2l2).